The sequence spans 317 residues: tRNA dimethylallyltransferase (317 aa).

14-21 contributes to the ATP binding site; it reads GPTASGKT. 16-21 lines the substrate pocket; that stretch reads TASGKT. Interaction with substrate tRNA stretches follow at residues 39–42 and 163–167; these read DSAL and QRIQR.

Belongs to the IPP transferase family. In terms of assembly, monomer. Mg(2+) is required as a cofactor.

The catalysed reaction is adenosine(37) in tRNA + dimethylallyl diphosphate = N(6)-dimethylallyladenosine(37) in tRNA + diphosphate. Functionally, catalyzes the transfer of a dimethylallyl group onto the adenine at position 37 in tRNAs that read codons beginning with uridine, leading to the formation of N6-(dimethylallyl)adenosine (i(6)A). The polypeptide is tRNA dimethylallyltransferase (Stenotrophomonas maltophilia (strain K279a)).